Reading from the N-terminus, the 218-residue chain is Small ribosomal subunit protein uS3c (218 aa).

The KH type-2 domain maps to 47-118 (VQKNMRTSSG…KLNIAVTRIA (72 aa)).

Belongs to the universal ribosomal protein uS3 family. Part of the 30S ribosomal subunit.

The protein resides in the plastid. Its subcellular location is the chloroplast. In Atropa belladonna (Belladonna), this protein is Small ribosomal subunit protein uS3c (rps3).